The following is a 245-amino-acid chain: MRVGVLGAKGKVGATMVRAVAAADDLTLSAELDAGDPLSLLTDGNTEVVIDFTHPDVVMGNLEFLIDNGIHAVVGTTGFTAERFQQVESWLVAKPNTSVLIAPNFAIGAVLSMHFAKQAARFFDSAEVIELHHPHKAEAPSGTAARTAKLIAEARKGLPPNPDATSTSLPGARGADVDGIPVHAVRLAGLVAHQEVLFGTEGEILTIRHDSLDRTSFVPGVLLAVRRIAERPGLTVGLEPLLDLH.

Residues 7–12 (GAKGKV), 75–77 (GTT), and 102–105 (APNF) each bind NAD(+). Residue His132 is the Proton donor/acceptor of the active site. His133 contacts (S)-2,3,4,5-tetrahydrodipicolinate. The active-site Proton donor is Lys136. A (S)-2,3,4,5-tetrahydrodipicolinate-binding site is contributed by 142 to 143 (GT).

The protein belongs to the DapB family.

The protein resides in the cytoplasm. It carries out the reaction (S)-2,3,4,5-tetrahydrodipicolinate + NAD(+) + H2O = (2S,4S)-4-hydroxy-2,3,4,5-tetrahydrodipicolinate + NADH + H(+). The enzyme catalyses (S)-2,3,4,5-tetrahydrodipicolinate + NADP(+) + H2O = (2S,4S)-4-hydroxy-2,3,4,5-tetrahydrodipicolinate + NADPH + H(+). The protein operates within amino-acid biosynthesis; L-lysine biosynthesis via DAP pathway; (S)-tetrahydrodipicolinate from L-aspartate: step 4/4. Functionally, catalyzes the conversion of 4-hydroxy-tetrahydrodipicolinate (HTPA) to tetrahydrodipicolinate. This chain is 4-hydroxy-tetrahydrodipicolinate reductase, found in Mycobacterium bovis (strain ATCC BAA-935 / AF2122/97).